Here is a 477-residue protein sequence, read N- to C-terminus: Probable cytosolic Fe-S cluster assembly factor GM20417 (477 aa).

[4Fe-4S] cluster-binding residues include Cys23, Cys68, Cys71, Cys74, Cys187, Cys243, Cys395, and Cys399.

This sequence belongs to the NARF family.

Functionally, component of the cytosolic iron-sulfur (Fe/S) protein assembly machinery. Required for maturation of extramitochondrial Fe/S proteins. In Drosophila sechellia (Fruit fly), this protein is Probable cytosolic Fe-S cluster assembly factor GM20417.